The sequence spans 544 residues: Probable protein kinase UbiB (544 aa).

The 379-residue stretch at 123–501 (EFDIKPLASA…KRQQATGKFL (379 aa)) folds into the Protein kinase domain. Residues 129-137 (LASASIAQV) and Lys-152 contribute to the ATP site. Residue Asp-287 is the Proton acceptor of the active site. A run of 2 helical transmembrane segments spans residues 496–516 (ATGK…AILV) and 519–539 (AYEQ…LLSW).

It belongs to the ABC1 family. UbiB subfamily.

The protein resides in the cell inner membrane. It functions in the pathway cofactor biosynthesis; ubiquinone biosynthesis [regulation]. Functionally, is probably a protein kinase regulator of UbiI activity which is involved in aerobic coenzyme Q (ubiquinone) biosynthesis. This is Probable protein kinase UbiB from Vibrio parahaemolyticus serotype O3:K6 (strain RIMD 2210633).